The following is a 347-amino-acid chain: NADH-ubiquinone oxidoreductase chain 2 (347 aa).

A run of 9 helical transmembrane segments spans residues 5-22 (ILTI…MVLI), 26-45 (WLTV…PILM), 60-80 (FLTQ…NLLL), 150-170 (NPNL…WGGL), 178-198 (ILAY…TYNP), 200-220 (LMML…MLFM), 242-262 (SLIL…GFIP), 274-294 (NMII…YFYM), and 324-344 (TLLP…PMML).

It belongs to the complex I subunit 2 family. As to quaternary structure, core subunit of respiratory chain NADH dehydrogenase (Complex I) which is composed of 45 different subunits. Interacts with TMEM242.

The protein localises to the mitochondrion inner membrane. It carries out the reaction a ubiquinone + NADH + 5 H(+)(in) = a ubiquinol + NAD(+) + 4 H(+)(out). Functionally, core subunit of the mitochondrial membrane respiratory chain NADH dehydrogenase (Complex I) which catalyzes electron transfer from NADH through the respiratory chain, using ubiquinone as an electron acceptor. Essential for the catalytic activity and assembly of complex I. The chain is NADH-ubiquinone oxidoreductase chain 2 from Martes flavigula (Yellow-throated marten).